Reading from the N-terminus, the 853-residue chain is ATP-dependent zinc metalloprotease FtsH (853 aa).

At 1-5 (MKNKK) the chain is on the cytoplasmic side. A helical membrane pass occupies residues 6–26 (YLQFGGIAAVILIVLFLVSLF). Residues 27–113 (SSDTRNFQEV…SYTTNVTQES (87 aa)) lie on the Extracellular side of the membrane. The chain crosses the membrane as a helical span at residues 114–134 (FLMSMLSFILPMVIIFGLLMF). The Cytoplasmic segment spans residues 135-853 (FLTRMQGGGM…NPENEGDNRG (719 aa)). 205 to 212 (GPPGTGKT) contacts ATP. Residue histidine 427 participates in Zn(2+) binding. Residue glutamate 428 is part of the active site. Zn(2+)-binding residues include histidine 431 and aspartate 503. Basic and acidic residues-rich tracts occupy residues 619-632 (ESTRFPRQENREPV) and 639-648 (ALERGEEPPK). The disordered stretch occupies residues 619-853 (ESTRFPRQEN…NPENEGDNRG (235 aa)). Low complexity predominate over residues 677–695 (PASSAGVAPAAGAAAGSYG). 2 stretches are compositionally biased toward polar residues: residues 728–739 (TPAQAPEQSPDS) and 770–788 (MDQSTGAEHTPGNVSQESP). Residues 796–813 (LPDHERSDYPEKAQKESV) show a composition bias toward basic and acidic residues.

It in the central section; belongs to the AAA ATPase family. In the C-terminal section; belongs to the peptidase M41 family. As to quaternary structure, homohexamer. Zn(2+) serves as cofactor.

Its subcellular location is the cell membrane. Acts as a processive, ATP-dependent zinc metallopeptidase for both cytoplasmic and membrane proteins. Plays a role in the quality control of integral membrane proteins. The sequence is that of ATP-dependent zinc metalloprotease FtsH from Corynebacterium glutamicum (strain ATCC 13032 / DSM 20300 / JCM 1318 / BCRC 11384 / CCUG 27702 / LMG 3730 / NBRC 12168 / NCIMB 10025 / NRRL B-2784 / 534).